The primary structure comprises 270 residues: Cerberus (270 aa).

Residues Met1–Gly20 form the signal peptide. N-linked (GlcNAc...) asparagine glycosylation is found at Asn103, Asn112, and Asn154. Cystine bridges form between Cys169/Cys215, Cys183/Cys229, Cys193/Cys245, and Cys197/Cys247. Residues Cys169–Asn253 enclose the CTCK domain. Asn228 carries an N-linked (GlcNAc...) asparagine glycan.

This sequence belongs to the DAN family. The long chain interacts with nodal/nr-1, bmp4 and wnt8, thereby inhibiting their function. The short chain interacts with nodal/nr-1 but not bmp4 or wnt8. As to expression, a component of the Nieuwkoop signaling center in the blastula. Expressed transiently in a broad anterior domain of the gastrula, including the anterior endoderm of the Spemann's organizer and more laterally the cardiac primordia. Expression is excluded from the prospective prechordal plate region and the ring of cells that give rise to the trunk-tail mesoderm.

The protein localises to the secreted. Its function is as follows. Inhibits wnt, nodal/nr-1 and bmp signaling in the embryo to promote head formation and anterior neural induction. Within the endoderm, acts as an essential mediator of nodal/nr-1-induced cardiogenesis in the overlying mesoderm. The protein is Cerberus of Xenopus laevis (African clawed frog).